Here is a 103-residue protein sequence, read N- to C-terminus: 4-amino-4-deoxychorismate mutase (103 aa).

Residues 1-92 enclose the Chorismate mutase domain; it reads MTEQNELQRL…EMCRVEDLVM (92 aa).

The catalysed reaction is 4-amino-4-deoxychorismate = 4-amino-4-deoxyprephenate. The protein operates within antibiotic biosynthesis. Involved in chloramphenicol biosynthesis. Probably catalyzes the conversion of 4-amino-4-deoxychorismate to 4-amino-4-deoxyprephenate. The chain is 4-amino-4-deoxychorismate mutase from Streptomyces venezuelae (strain ATCC 10712 / CBS 650.69 / DSM 40230 / JCM 4526 / NBRC 13096 / PD 04745).